The primary structure comprises 1117 residues: MQMAEAEQENGAGALKIATNAGATDRPAHQQLPLPVEDQQDEVLTPAEKGKFEYPPPPPPPTPVQAPLATKATALNASQEHDDDEANSEKWEDPCAPPPPPPLPTSAFLATGLGYLKLPAFKLKDALEKAITKLEANKRTLKASPESSRSIKNKNVVALEMLPRRSNPETIGDGSMLASTSTAVMLQTKKPAVIVEMERRCKIINLLAKQNQILESISGEAIPMHGPSKHLHEDEGLTLQVLSARASTPYTQPSSMLSCTAVSCDLEHDSPRKQVASKEAVPEQQSSQVQQKRPPSTGIHKPGSLRAPKAVRPTTAPVVSSKPVKSYTRSRLMDIRNGMFNALMHRSKESFVMPRIATCDDIELEGRLRRMNIWRTSDGTRFRTRSTTANLNMNNNNNNECMPAFFKNKNKPNLISDESIIQSQPPQPQTEFQDPAIVNQRRIGSGRLNHSKWGYNDEDYHSYHNGKSQHMEEVNSKNSKNMTVLQFFDNGEISSQPQRRPNTPVMGMSINRSENDTLHSNESSEDLSRANENYVKRVMSGFLVVSKPKSRDVEDRHHRRYRNQNEEPEWFSCGPTSRLDTIELCGFDEDEEKMLKEGNKNHGLGETERETSKQKMDHKYKWTHAEPMGRSKYMPKHDTNNNHNVENMNNVMATEHQQQKEEKRPGSGRSFQFDKFNQSQQNYESSSYVNHQQPPQTQPQQMQQQSNTNTNNSKFMSFFANEGNSSSSSLNEFFKQAINQGHGNNPEQPKSLGHIGQMPSVDQLEAKWRRNSLNNVGETANKQTDNFQKLIGSLSSAKPQSQAVGYDAISNFIMQQQQYQQQQQKQHLIIQQQQQHTAFLASLQLKAILGRADTQLLLLRLTKGEISKHGLLVQLANPRLTDMDREAITAVLQFTNTQQQQQQHKQQLDMLSSTVIASQLQNLHNLAIVQQTLAARQQPQHNPQTQAPHQLSQEDLQAHANVIMRNAVMKRKIEEQTSKLINGGAKHQAQQQYLNRGQQRQARPDANSNALLHALISGGGNNHASGYPMNGQPQKHHSNLRFGDNQNFQSFESNQPHFATQYKQQYQQSQQQHPHQQPQQLNSLHQNNAGAVNSFNKAQMQAQSAISMLPNSGDEFH.

Residues 1–106 (MQMAEAEQEN…PPPPPPLPTS (106 aa)) are disordered. Composition is skewed to pro residues over residues 54–64 (YPPPPPPPTPV) and 95–104 (CAPPPPPPLP). Phosphoserine is present on residues Ser-263 and Ser-270. The tract at residues 270–326 (SPRKQVASKEAVPEQQSSQVQQKRPPSTGIHKPGSLRAPKAVRPTTAPVVSSKPVKS) is disordered. Residues 283–294 (EQQSSQVQQKRP) show a composition bias toward polar residues. A YXXXXLphi motif 1 motif is present at residues 327 to 333 (YTRSRLM). A phosphoserine mark is found at Ser-347 and Ser-350. The YXXXXLphi motif 2 signature appears at 363 to 369 (ELEGRLR). Disordered stretches follow at residues 493–528 (ISSQPQRRPNTPVMGMSINRSENDTLHSNESSEDLS), 596–618 (KEGNKNHGLGETERETSKQKMDH), 654–673 (TEHQQQKEEKRPGSGRSFQF), 679–728 (SQQN…SSSS), 984–1004 (GAKHQAQQQYLNRGQQRQARP), and 1016–1051 (ISGGGNNHASGYPMNGQPQKHHSNLRFGDNQNFQSF). Thr-503 carries the phosphothreonine modification. Ser-509, Ser-513, Ser-520, Ser-523, and Ser-524 each carry phosphoserine. 2 stretches are compositionally biased toward low complexity: residues 679 to 712 (SQQNYESSSYVNHQQPPQTQPQQMQQQSNTNTNN) and 988 to 1001 (QAQQQYLNRGQQRQ).

Belongs to the 4E-T/EIF4E-T family. Component of the osk RNP complex, which is composed of at least exu, yps, aret/bruno, cup, and the mRNA of osk. Interacts with the decapping activators me31B and tral. Component of the nanos RNP complex, which is composed of at least smg, cup, tral, me31B, the CCR4-NOT complex members Rga/NOT2 and Caf1, and the mRNA of nanos (nos). Interacts with btz. Recruited to the 3'-UTR of nos and osk mRNAs by smg and btz, respectively. Forms a ribonucleoprotein complex (RNP) containing at least me31B, eIF4E1, cup, tral and pAbp; this interaction is required for the translational silencing of maternal mRNAs during the maternal-to-zygotic transition. No interaction was detected with pAbp in 1-5 hour embryos. Interacts with osk and vas. Interacts with Pop2, twin/CCR4, Rga, Not3 and Not1 which are all core components of the CCR4-NOT deadenylase complex; interaction with the complex is required for cup deadenylation activity. Interacts with nanos. Interacts with smg. Interacts (via YXXXXLphi motifs) with eIF4E1; the interaction promotes retention of cup in the cytoplasm. Interacts with orb; the interaction represses the orb positive autoregulatory loop. Interacts with Nup154. As to expression, predominantly expressed in ovaries and in 0-2 hours old embryos. Weakly expressed in testis. Expressed in young embryos through stage 9, then it decreases throughout the rest of embryogenesis. In ovaries, it is expressed in germ cells throughout pre-vitellogenic development, but is not expressed in the somatic follicle cells. In germarial cysts, the protein (and not the transcripts) is transported selectively into the oocyte.

It localises to the cytoplasm. It is found in the nucleus. Its subcellular location is the cytoplasmic ribonucleoprotein granule. Functionally, adapter protein that plays a central role in localization of transcripts in the oocyte and in young embryos. Maintains RNA targets in a repressed state by promoting their deadenylation and protects deadenylated mRNAs from further degradation. Binds to and recruits eIF-4E to the 3'-UTR of some mRNA targets which prevents interaction between eIF4E1 and eIF4G. This may contribute to translational repression but does not appear to be necessary for it to occur. Can promote translational repression independently of deadenylation and eIF4E1 binding. Required for correct localization of eIF4E1 in the developing oocyte. Required for translational repression of oskar (osk) mRNA. Also required for the translational repression of nanos (nos) mRNA. Promotes the accumulation of the germ plasm components osk, vas and stau at the posterior pole of the oocyte and is required for germ cell development. Represses orb positive autoregulatory activity which prevents premature activation of orb and ensures its accumulation specifically in the developing oocyte. In 0-1 hour embryos, forms a complex with me31B, cup, tral and pAbp which binds to various mRNAs including maternal mRNAs, and down-regulates their expression during the maternal-to-zygotic transition. This chain is Protein cup (cup), found in Drosophila melanogaster (Fruit fly).